Consider the following 82-residue polypeptide: Cytotoxin homolog Clbp-3 (82 aa).

Positions 1-21 are cleaved as a signal peptide; that stretch reads MKTLLLTLVVVTIVCLDLGYT. Disulfide bonds link Cys-24–Cys-43, Cys-36–Cys-60, Cys-64–Cys-75, and Cys-76–Cys-81.

This sequence belongs to the three-finger toxin family. Short-chain subfamily. Orphan group XV sub-subfamily. Expressed by the venom gland.

Its subcellular location is the secreted. The protein resides in the target cell membrane. Functionally, has low cytotoxic activity. This Naja atra (Chinese cobra) protein is Cytotoxin homolog Clbp-3.